The chain runs to 735 residues: Mitochondrial potassium channel ATP-binding subunit (735 aa).

The transit peptide at 1 to 25 directs the protein to the mitochondrion; sequence MLVHLFRVGIRGGPFPGRLLPPLRF. Topologically, residues 26–144 are mitochondrial matrix; sequence QTFSAVRNTW…KLFWQFLHPH (119 aa). The helical transmembrane segment at 145 to 165 threads the bilayer; that stretch reads LLVLGVAVVLALGAALVNVQI. The region spanning 150–437 is the ABC transmembrane type-1 domain; sequence VAVVLALGAA…LSVLFGQVVR (288 aa). The Mitochondrial intermembrane portion of the chain corresponds to 166–195; that stretch reads PLLLGQLVEVVAKYTRDHVGSFMTESQNLS. A helical membrane pass occupies residues 196–216; that stretch reads THLLILYGVQGLLTFGYLVLL. Topologically, residues 217–295 are mitochondrial matrix; the sequence is SHVGERMAVD…SLSMLSTRLT (79 aa). The helical transmembrane segment at 296–316 threads the bilayer; it reads LLLMVATPALMGVGTLMGSGL. The Mitochondrial intermembrane portion of the chain corresponds to 317-735; it reads RKLSRQCQEQ…EGPRSHQHKS (419 aa). The 238-residue stretch at 472–709 folds into the ABC transporter domain; sequence VTFQNVCFSY…GGLYAELIRR (238 aa). Residue 507 to 514 participates in ATP binding; sequence GQSGGGKT. Positions 712-735 are disordered; sequence LDAPRTAAPPPKKPEGPRSHQHKS.

The protein belongs to the ABC transporter superfamily. ABCB family. Multidrug resistance exporter (TC 3.A.1.201) subfamily. In terms of assembly, the mitochondrial potassium channel (mitoK(ATP)) is composed of 4 subunits of CCDC51/MITOK and 4 subunits of ABCB8/MITOSUR. Interacts with C10orf88/PAAT. Interacts with NRP1; NRP1 regulates ABCB8/MITOSUR protein levels in mitochondria. Ubiquitous.

The protein resides in the mitochondrion inner membrane. With respect to regulation, channel activity inhibited by ATP via ABCB8/MITOSUR subunit. ATP-binding subunit of the mitochondrial ATP-gated potassium channel (mitoK(ATP)). Together with pore-forming subunit CCDC51/MITOK of the mitoK(ATP) channel, mediates ATP-dependent potassium currents across the mitochondrial inner membrane. An increase in ATP intracellular levels closes the channel, inhibiting K(+) transport, whereas a decrease in ATP levels enhances K(+) uptake in the mitochondrial matrix. Plays a role in mitochondrial iron transport. Required for maintenance of normal cardiac function, possibly by influencing mitochondrial iron export and regulating the maturation of cytosolic iron sulfur cluster-containing enzymes. The sequence is that of Mitochondrial potassium channel ATP-binding subunit from Homo sapiens (Human).